Reading from the N-terminus, the 333-residue chain is L-lactate dehydrogenase A chain (333 aa).

A2 carries the N-acetylalanine modification. NAD(+) contacts are provided by residues 30–58 (GAVG…MEDK) and R100. R107, N139, and R170 together coordinate substrate. N139 lines the NAD(+) pocket. Residue H194 is the Proton acceptor of the active site. A substrate-binding site is contributed by T249.

It belongs to the LDH/MDH superfamily. LDH family. As to quaternary structure, homotetramer.

It is found in the cytoplasm. It carries out the reaction (S)-lactate + NAD(+) = pyruvate + NADH + H(+). The protein operates within fermentation; pyruvate fermentation to lactate; (S)-lactate from pyruvate: step 1/1. Interconverts simultaneously and stereospecifically pyruvate and lactate with concomitant interconversion of NADH and NAD(+). The sequence is that of L-lactate dehydrogenase A chain (ldha) from Squalus acanthias (Spiny dogfish).